The chain runs to 417 residues: Phosphoglycerate kinase 1 (417 aa).

An N-acetylserine modification is found at Ser2. Residues Ser2 and Ser4 each carry the phosphoserine modification. An N6-succinyllysine modification is found at Lys6. Lys11 is modified (N6-acetyllysine). Residues Val23, Asp24, Phe25, Asn26, Gln38, and Arg39 each coordinate (2R)-3-phosphoglycerate. Residues 38-43 (QRIKAA) form a mitochondrial targeting region exposed following cis-trans isomerization by PIN1 and recognized by the TOM complex for mitochondrial translocation of the protein region. Lys48 carries the N6-acetyllysine; alternate modification. At Lys48 the chain carries N6-succinyllysine; alternate. Positions 62, 63, 65, and 66 each coordinate (2R)-3-phosphoglycerate. N6-acetyllysine is present on Lys75. Residue Tyr76 is modified to Phosphotyrosine. 2 positions are modified to N6-acetyllysine: Lys86 and Lys91. An N6-acetyllysine; alternate modification is found at Lys97. At Lys97 the chain carries N6-(2-hydroxyisobutyryl)lysine; alternate. (2R)-3-phosphoglycerate-binding residues include Leu122 and Arg123. Lys131 is modified (N6-acetyllysine; alternate). Lys131 carries the N6-malonyllysine; alternate modification. Lys146 carries the post-translational modification N6-acetyllysine. 2 residues coordinate (2R)-3-phosphoglycerate: His170 and Arg171. N6-succinyllysine is present on Lys191. Tyr196 carries the phosphotyrosine modification. At Lys199 the chain carries N6-acetyllysine. The residue at position 203 (Ser203) is a Phosphoserine. Gly214 serves as a coordination point for ADP. Gly214 serves as a coordination point for CDP. Residues Ala215 and Lys216 each contribute to the AMP site. Ala215 lines the ATP pocket. Mg(2+) is bound at residue Ala215. Lys216 bears the N6-(2-hydroxyisobutyryl)lysine mark. Mg(2+)-binding residues include Ala218 and Asp219. Residue Asp219 coordinates CDP. Lys220 contacts AMP. An ATP-binding site is contributed by Lys220. Lys220 is subject to N6-(2-hydroxyisobutyryl)lysine. Gly238 is a binding site for ADP. Gly238 lines the CDP pocket. An AMP-binding site is contributed by Gly239. ATP is bound at residue Gly239. Lys267 and Lys291 each carry N6-acetyllysine. An AMP-binding site is contributed by Gly313. An ATP-binding site is contributed by Gly313. Lys323 carries the post-translational modification N6-(2-hydroxyisobutyryl)lysine. CDP contacts are provided by Gly338, Val340, and Phe343. Residue Phe343 coordinates ADP. Glu344 contacts AMP. An ATP-binding site is contributed by Glu344. Position 354 is a phosphoserine (Ser354). Lys361 is subject to N6-acetyllysine. Asp375 and Thr376 together coordinate ATP. A Mg(2+)-binding site is contributed by Asp375.

Belongs to the phosphoglycerate kinase family. As to quaternary structure, monomer. Interacts with kinase MAPK1/ERK2; the interaction is direct, occurs under hypoxic conditions, and promotes its interaction with PIN1. Interacts with peptidyl-prolyl cis-trans isomerase PIN1; the interaction is direct, occurs under hypoxic conditions, and targets the protein to the mitochondrion by promoting interactions with the TOM complex. Interacts with mitochondrial circRNA mcPGK1 (via its 2nd stem-loop); the interaction is direct and targets the protein to the mitochondrion by promoting interactions with the TOM complex. Interacts with pyruvate dehydrogenase kinase PDK1; the interaction is direct, occurs under hypoxic conditions and leads to PDK1-mediated inhibition of pyruvate dehydrogenase complex activity. The cofactor is Mg(2+). Post-translationally, phosphorylated at Ser-203 by MAPK1/ERK2 under hypoxic conditions, which promotes its mitochondrial targeting.

The protein resides in the cytoplasm. The protein localises to the cytosol. It is found in the mitochondrion matrix. It carries out the reaction (2R)-3-phosphoglycerate + ATP = (2R)-3-phospho-glyceroyl phosphate + ADP. It catalyses the reaction L-seryl-[protein] + ATP = O-phospho-L-seryl-[protein] + ADP + H(+). It functions in the pathway carbohydrate degradation; glycolysis; pyruvate from D-glyceraldehyde 3-phosphate: step 2/5. Its function is as follows. Catalyzes one of the two ATP producing reactions in the glycolytic pathway via the reversible conversion of 1,3-diphosphoglycerate to 3-phosphoglycerate. Both L- and D- forms of purine and pyrimidine nucleotides can be used as substrates, but the activity is much lower on pyrimidines. In addition to its role as a glycolytic enzyme, it seems that PGK-1 acts as a polymerase alpha cofactor protein (primer recognition protein). Acts as a protein kinase when localized to the mitochondrion where it phosphorylates pyruvate dehydrogenase kinase PDK1 to inhibit pyruvate dehydrogenase complex activity and suppress the formation of acetyl-coenzyme A from pyruvate, and consequently inhibit oxidative phosphorylation and promote glycolysis. May play a role in sperm motility. This is Phosphoglycerate kinase 1 (Pgk1) from Rattus norvegicus (Rat).